The sequence spans 538 residues: Atos homolog protein B (538 aa).

Composition is skewed to polar residues over residues 1–12 (MRHVQAETSPSS) and 129–141 (GGSS…SGAR). Disordered regions lie at residues 1-98 (MRHV…EPPT), 129-185 (GGSS…QLHT), and 201-303 (LVSG…PTDC). Residues 227 to 238 (HTPPGPGPPGPC) show a composition bias toward pro residues. 2 positions are modified to phosphoserine: Ser-254 and Ser-255. Positions 348–430 (LLGNFEESLL…VPKVGTIQVT (83 aa)) are required for macropage invasion. A transactivation domain 1 (TAD1) region spans residues 436–444 (QTVVKMFLV).

Belongs to the ATOS family.

The protein localises to the nucleus. In terms of biological role, transcription regulator that may syncronize transcriptional and translational programs. This chain is Atos homolog protein B, found in Bos taurus (Bovine).